The chain runs to 280 residues: Large ribosomal subunit protein uL2 (280 aa).

The segment at 226 to 280 is disordered; it reads NPIDHPHGGGEGRTSGGRHPVTPWGKPTKGAKTRNKKKASSQLIIRSRHAKKKGR. Composition is skewed to basic residues over residues 254-264 and 271-280; these read KGAKTRNKKKA and RSRHAKKKGR.

The protein belongs to the universal ribosomal protein uL2 family. As to quaternary structure, part of the 50S ribosomal subunit. Forms a bridge to the 30S subunit in the 70S ribosome.

Its function is as follows. One of the primary rRNA binding proteins. Required for association of the 30S and 50S subunits to form the 70S ribosome, for tRNA binding and peptide bond formation. It has been suggested to have peptidyltransferase activity; this is somewhat controversial. Makes several contacts with the 16S rRNA in the 70S ribosome. This chain is Large ribosomal subunit protein uL2, found in Roseobacter denitrificans (strain ATCC 33942 / OCh 114) (Erythrobacter sp. (strain OCh 114)).